The following is a 313-amino-acid chain: Intelectin-like protein (313 aa).

A Fibrinogen C-terminal domain is found at 33-251; the sequence is TSCCSQTSPG…NNEKAPMALC (219 aa). 7 residues coordinate Ca(2+): histidine 86, glutamate 87, asparagine 89, glycine 92, glycine 97, aspartate 98, and aspartate 133. 3 disulfide bridges follow: cysteine 94–cysteine 280, cysteine 199–cysteine 259, and cysteine 251–cysteine 265. The Ca(2+) site is built by asparagine 260, glutamate 262, glutamate 274, and aspartate 282. A carbohydrate contacts are provided by residues 262-263 and glutamate 274; that span reads EH.

In terms of assembly, monomer, homodimer, homotrimer and homotetramer. Mostly monomeric or dimeric.

Its subcellular location is the secreted. Binds mannan, mannose and, to a lesser degree, D-lactose, N-acetylgalactosamine, N-acetylglucosamine and beta-D-glucose. In Alligator mississippiensis (American alligator), this protein is Intelectin-like protein.